We begin with the raw amino-acid sequence, 242 residues long: Venom nerve growth factor 2 (242 aa).

The signal sequence occupies residues 1-18; that stretch reads MSMLCYTLIIAFLIGIWA. Positions 19–125 are excised as a propeptide; sequence APQSEDNVPL…ALNRNIQAKR (107 aa). The segment covering 47–66 has biased composition (basic and acidic residues); that stretch reads DLKTSRNTDQRHPAPKKADD. Positions 47-70 are disordered; the sequence is DLKTSRNTDQRHPAPKKADDQELG. Cystine bridges form between Cys139/Cys203, Cys181/Cys231, and Cys191/Cys233.

The protein belongs to the NGF-beta family. As to quaternary structure, homodimer; non-covalently linked. In terms of tissue distribution, expressed by the venom gland.

The protein resides in the secreted. Nerve growth factor is important for the development and maintenance of the sympathetic and sensory nervous systems. It stimulates division and differentiation of sympathetic and embryonic sensory neurons as well as basal forebrain cholinergic neurons in the brain. Its relevance in the snake venom is not clear. However, it has been shown to inhibit metalloproteinase-dependent proteolysis of platelet glycoprotein Ib alpha, suggesting a metalloproteinase inhibition to prevent metalloprotease autodigestion and/or protection against prey proteases. Binds a lipid between the two protein chains in the homodimer. The lipid-bound form promotes histamine relase from mouse mast cells, contrary to the lipid-free form. This Pseudechis australis (Mulga snake) protein is Venom nerve growth factor 2.